A 317-amino-acid chain; its full sequence is Tenomodulin (317 aa).

Over 1–30 the chain is Cytoplasmic; that stretch reads MAKNPPENCEDCHILNAEAFKSKKICKSLK. The chain crosses the membrane as a helical; Signal-anchor for type II membrane protein span at residues 31–50; sequence ICGLVFGILALTLIVLFWGS. Topologically, residues 51-317 are extracellular; the sequence is KHFWPEVPKK…WWVARMLGRV (267 aa). The BRICHOS domain maps to 93–186; that stretch reads GNGTDETLEV…ICDNVTMYWI (94 aa). Residue asparagine 94 is glycosylated (N-linked (GlcNAc...) asparagine). Cysteines 120 and 178 form a disulfide. The N-linked (GlcNAc...) asparagine glycan is linked to asparagine 180. The residue at position 239 (serine 239) is a Phosphoserine.

This sequence belongs to the chondromodulin-1 family. As to expression, highly expressed in hypovascular connective tissues such as tendons. Also has strong expression in adipose tissue.

The protein resides in the membrane. It is found in the nucleus envelope. It localises to the cytoplasm. May be an angiogenesis inhibitor. The sequence is that of Tenomodulin (TNMD) from Homo sapiens (Human).